The sequence spans 78 residues: Large ribosomal subunit protein bL28 (78 aa).

The protein belongs to the bacterial ribosomal protein bL28 family.

The chain is Large ribosomal subunit protein bL28 from Hydrogenovibrio crunogenus (strain DSM 25203 / XCL-2) (Thiomicrospira crunogena).